The sequence spans 275 residues: D-apionate oxidoisomerase (275 aa).

NAD(+) is bound by residues 11–13, Glu32, and Asp68; that span reads GKM. Zn(2+)-binding residues include His113 and Glu183.

This sequence belongs to the ApnO family. It depends on Zn(2+) as a cofactor.

It carries out the reaction D-apionate + NAD(+) = 3-oxoisoapionate + NADH + H(+). The protein operates within carbohydrate metabolism. Its function is as follows. Involved in catabolism of D-apiose. Catalyzes the conversion of D-apionate to 3-oxo-isoapionate. The polypeptide is D-apionate oxidoisomerase (Rhizobium rhizogenes (strain K84 / ATCC BAA-868) (Agrobacterium radiobacter)).